The chain runs to 317 residues: MEKTNHSLTTQFILVGFSDHPDLKTPLFLLFSVIYLVTMVGNLGLVAVIYLEPRLHTPMYIFLGNLALMDSCCSCAITPKILENFFSVDRRISLYECMAQFYFLCLAETADCFLLAAMAYDRYVAICNPLQYHSMMSKKLSIQMSIGTFITSNLHSLIHVGCLLRLTFCKSNRIDHFFCDILPLYRLSCTDPFINELMIYIFSMPIQVFTITTVLVSYFCILLTIFKMKSKDGRGKAFSTCASHFFSVSIFYVCLLMYIRPFDEGNKDIPVAVFYTIIIPLLNPFIYSLRNKEVVNAVKKVMKTHSIFKNASASMAR.

Topologically, residues 1-28 are extracellular; it reads MEKTNHSLTTQFILVGFSDHPDLKTPLF. A glycan (N-linked (GlcNAc...) asparagine) is linked at Asn-5. The helical transmembrane segment at 29 to 49 threads the bilayer; that stretch reads LLFSVIYLVTMVGNLGLVAVI. Residues 50–56 are Cytoplasmic-facing; it reads YLEPRLH. Residues 57–77 traverse the membrane as a helical segment; that stretch reads TPMYIFLGNLALMDSCCSCAI. The Extracellular segment spans residues 78 to 93; it reads TPKILENFFSVDRRIS. Residues 94 to 114 form a helical membrane-spanning segment; that stretch reads LYECMAQFYFLCLAETADCFL. Cys-97 and Cys-189 are disulfide-bonded. The Cytoplasmic segment spans residues 115-144; that stretch reads LAAMAYDRYVAICNPLQYHSMMSKKLSIQM. The helical transmembrane segment at 145 to 165 threads the bilayer; the sequence is SIGTFITSNLHSLIHVGCLLR. Residues 166–198 lie on the Extracellular side of the membrane; sequence LTFCKSNRIDHFFCDILPLYRLSCTDPFINELM. Residues 199–219 form a helical membrane-spanning segment; that stretch reads IYIFSMPIQVFTITTVLVSYF. Topologically, residues 220–239 are cytoplasmic; that stretch reads CILLTIFKMKSKDGRGKAFS. Residues 240-259 traverse the membrane as a helical segment; it reads TCASHFFSVSIFYVCLLMYI. At 260-268 the chain is on the extracellular side; the sequence is RPFDEGNKD. A helical transmembrane segment spans residues 269–289; that stretch reads IPVAVFYTIIIPLLNPFIYSL. Over 290 to 317 the chain is Cytoplasmic; sequence RNKEVVNAVKKVMKTHSIFKNASASMAR.

This sequence belongs to the G-protein coupled receptor 1 family.

The protein localises to the cell membrane. In terms of biological role, potential odorant receptor. The polypeptide is Olfactory receptor 5K16 (Mus musculus (Mouse)).